A 139-amino-acid chain; its full sequence is Acidic phospholipase A2 Ts-A4 (139 aa).

Residues 1-16 (MRTLWILAVLLVGVEG) form the signal peptide. 7 disulfide bridges follow: cysteine 42–cysteine 132, cysteine 44–cysteine 60, cysteine 59–cysteine 111, cysteine 65–cysteine 139, cysteine 66–cysteine 104, cysteine 73–cysteine 97, and cysteine 91–cysteine 102. Ca(2+)-binding residues include tyrosine 43, glycine 45, and glycine 47. Histidine 63 is an active-site residue. Aspartate 64 is a Ca(2+) binding site. Residue aspartate 105 is part of the active site.

The cofactor is Ca(2+). As to expression, expressed by the venom gland.

The protein resides in the secreted. It catalyses the reaction a 1,2-diacyl-sn-glycero-3-phosphocholine + H2O = a 1-acyl-sn-glycero-3-phosphocholine + a fatty acid + H(+). Functionally, PLA2 catalyzes the calcium-dependent hydrolysis of the 2-acyl groups in 3-sn-phosphoglycerides. This Trimeresurus stejnegeri (Chinese green tree viper) protein is Acidic phospholipase A2 Ts-A4.